The primary structure comprises 171 residues: NADP-reducing hydrogenase subunit HndA (171 aa).

Positions 98, 103, 139, and 143 each coordinate [2Fe-2S] cluster.

It belongs to the complex I 24 kDa subunit family. As to quaternary structure, heterotetramer composed of HndA, HndB, HndC and HndD subunits. HndA and HndB could form a heterodimeric intermediate in the electron transfer between the active site of hydrogenase subunit HndD and the NADP reduction site of the reducing subunit HndC. The cofactor is [2Fe-2S] cluster.

It catalyses the reaction H2 + NADP(+) = NADPH + H(+). Its activity is regulated as follows. Inhibited by oxygen. Catalyzes the reduction of NADP in the presence of molecular H(2) to yield NADPH. The chain is NADP-reducing hydrogenase subunit HndA (hndA) from Solidesulfovibrio fructosivorans (Desulfovibrio fructosivorans).